The primary structure comprises 238 residues: MAAALAVRRAGSAPAFGPEALTPDWENREVSTGTTIMAVQFNGGVVLGADSRTTTGSYIANRVTDKLTPIHDHIFCCRSGSAADTQAVADAVTYQLGFHSIELNEPPLVHTAASLFKEMCYRYREDLMAGIIIAGWDPQEGGQVYSVPMGGMMVRQSFAIGGSGSSYIYGYVDATYREGMTKDECLQFTANALALAMERDGSSGGVIRLAAIQESGVERQVLLGDQIPKFTIATLPPP.

Ala-2 carries the N-acetylalanine modification. The propeptide at 2–33 (AAALAVRRAGSAPAFGPEALTPDWENREVSTG) is removed in mature form. Thr-34 (nucleophile) is an active-site residue. Thr-68 carries the post-translational modification Phosphothreonine.

This sequence belongs to the peptidase T1B family. As to quaternary structure, the 26S proteasome consists of a 20S proteasome core and two 19S regulatory subunits. The 20S proteasome core is a barrel-shaped complex made of 28 subunits that are arranged in four stacked rings. The two outer rings are each formed by seven alpha subunits, and the two inner rings are formed by seven beta subunits. The proteolytic activity is exerted by three beta-subunits PSMB5, PSMB6 and PSMB7.

The protein resides in the cytoplasm. The protein localises to the nucleus. It catalyses the reaction Cleavage of peptide bonds with very broad specificity.. Its function is as follows. Component of the 20S core proteasome complex involved in the proteolytic degradation of most intracellular proteins. This complex plays numerous essential roles within the cell by associating with different regulatory particles. Associated with two 19S regulatory particles, forms the 26S proteasome and thus participates in the ATP-dependent degradation of ubiquitinated proteins. The 26S proteasome plays a key role in the maintenance of protein homeostasis by removing misfolded or damaged proteins that could impair cellular functions, and by removing proteins whose functions are no longer required. Associated with the PA200 or PA28, the 20S proteasome mediates ubiquitin-independent protein degradation. This type of proteolysis is required in several pathways including spermatogenesis (20S-PA200 complex) or generation of a subset of MHC class I-presented antigenic peptides (20S-PA28 complex). Within the 20S core complex, PSMB6 displays a peptidylglutamyl-hydrolyzing activity also termed postacidic or caspase-like activity, meaning that the peptides bond hydrolysis occurs directly after acidic residues. The protein is Proteasome subunit beta type-6 (Psmb6) of Mus musculus (Mouse).